We begin with the raw amino-acid sequence, 154 residues long: UPF0225 protein SG1365 (154 aa).

The protein belongs to the UPF0225 family.

The sequence is that of UPF0225 protein SG1365 from Sodalis glossinidius (strain morsitans).